The primary structure comprises 314 residues: Basic endochitinase (314 aa).

A signal peptide spans 1–20 (MGLWALVAFCLLSLILVGSA). The region spanning 21-61 (EQCGGQAGGRVCPGGACCSKFGWCGNTADYCGSGCQSQCSS) is the Chitin-binding type-1 domain. 7 cysteine pairs are disulfide-bonded: cysteine 23/cysteine 38, cysteine 32/cysteine 44, cysteine 37/cysteine 51, cysteine 55/cysteine 59, cysteine 86/cysteine 148, cysteine 160/cysteine 168, and cysteine 267/cysteine 299. Glutamate 130 acts as the Proton donor in catalysis.

Belongs to the glycosyl hydrolase 19 family. Chitinase class I subfamily.

The catalysed reaction is Random endo-hydrolysis of N-acetyl-beta-D-glucosaminide (1-&gt;4)-beta-linkages in chitin and chitodextrins.. In terms of biological role, defense against chitin-containing fungal pathogens. The polypeptide is Basic endochitinase (CHIT1B) (Vitis vinifera (Grape)).